Here is a 335-residue protein sequence, read N- to C-terminus: Galactosylgalactosylxylosylprotein 3-beta-glucuronosyltransferase 3 (335 aa).

The Cytoplasmic portion of the chain corresponds to 1-7; that stretch reads MKLKLKN. A helical; Signal-anchor for type II membrane protein membrane pass occupies residues 8–28; it reads VFLAYFLVSIAGLLYALVQLG. Topologically, residues 29–335 are lumenal; it reads QPCDCLPPLR…GQGSDPAIEV (307 aa). Residue Asp-196 coordinates Mn(2+). Glu-281 functions as the Proton acceptor in the catalytic mechanism. A glycan (N-linked (GlcNAc...) asparagine) is linked at Asn-300. Over residues 312 to 322 the composition is skewed to basic and acidic residues; it reads EKPKMKQEEQL. Residues 312-335 form a disordered region; the sequence is EKPKMKQEEQLQRQGQGSDPAIEV.

The protein belongs to the glycosyltransferase 43 family. Homodimer; disulfide-linked. Interacts with PXYLP1; the interaction increases the 2-phosphoxylose phosphatase activity of PXYLP1 during completion of linkage region formation in a B3GAT3-mediated manner. The cofactor is Mn(2+). In terms of processing, N-glycosylated. Liver, brain and heart. Moderate expression seen in lung, skeletal muscle, kidney and testis.

The protein localises to the golgi apparatus membrane. Its subcellular location is the golgi apparatus. It is found in the cis-Golgi network. It carries out the reaction 3-O-(beta-D-galactosyl-(1-&gt;3)-beta-D-galactosyl-(1-&gt;4)-beta-D-xylosyl)-L-seryl-[protein] + UDP-alpha-D-glucuronate = 3-O-(beta-D-GlcA-(1-&gt;3)-beta-D-Gal-(1-&gt;3)-beta-D-Gal-(1-&gt;4)-beta-D-Xyl)-L-seryl-[protein] + UDP + H(+). It participates in protein modification; protein glycosylation. Functionally, glycosaminoglycans biosynthesis. Involved in forming the linkage tetrasaccharide present in heparan sulfate and chondroitin sulfate. Transfers a glucuronic acid moiety from the uridine diphosphate-glucuronic acid (UDP-GlcUA) to the common linkage region trisaccharide Gal-beta-1,3-Gal-beta-1,4-Xyl covalently bound to a Ser residue at the glycosaminylglycan attachment site of proteoglycans. Can also play a role in the biosynthesis of l2/HNK-1 carbohydrate epitope on glycoproteins. Highest activity seen with Gal-beta-1,3-Gal-beta-O-R (where R=naphthalenemethanol or benzyl alcohol). Stimulates 2-phosphoxylose phosphatase activity of PXYLP1 in presence of uridine diphosphate-glucuronic acid (UDP-GlcUA) during completion of linkage region formation. In Cricetulus griseus (Chinese hamster), this protein is Galactosylgalactosylxylosylprotein 3-beta-glucuronosyltransferase 3 (B3GAT3).